The sequence spans 322 residues: HPr kinase/phosphorylase (322 aa).

Catalysis depends on residues histidine 146 and lysine 167. 161–168 (GDSGLGKS) provides a ligand contact to ATP. Residue serine 168 participates in Mg(2+) binding. Aspartate 185 acts as the Proton acceptor; for phosphorylation activity. Proton donor; for dephosphorylation activity in catalysis. The interval 209–218 (LEVRGLGLLD) is important for the catalytic mechanism of both phosphorylation and dephosphorylation. Glutamate 210 is a binding site for Mg(2+). Arginine 250 is a catalytic residue. Residues 271–276 (QVAAGR) are important for the catalytic mechanism of dephosphorylation.

The protein belongs to the HPrK/P family. Homohexamer. The cofactor is Mg(2+).

It carries out the reaction [HPr protein]-L-serine + ATP = [HPr protein]-O-phospho-L-serine + ADP + H(+). It catalyses the reaction [HPr protein]-O-phospho-L-serine + phosphate + H(+) = [HPr protein]-L-serine + diphosphate. Functionally, catalyzes the ATP- as well as the pyrophosphate-dependent phosphorylation of a specific serine residue in HPr, a phosphocarrier protein of the phosphoenolpyruvate-dependent sugar phosphotransferase system (PTS). HprK/P also catalyzes the pyrophosphate-producing, inorganic phosphate-dependent dephosphorylation (phosphorolysis) of seryl-phosphorylated HPr (P-Ser-HPr). The chain is HPr kinase/phosphorylase from Burkholderia ambifaria (strain ATCC BAA-244 / DSM 16087 / CCUG 44356 / LMG 19182 / AMMD) (Burkholderia cepacia (strain AMMD)).